The sequence spans 312 residues: MEIAVFGGGAWGRALAFAFGEKNEVKIISRRDLNEPLKKLNGALISKGSAPIEQVDLQRGLKAALYVIAISVQHLREWFQNASLPKNAKVLIASKGIEVLNRAFVSEIAKDFIDPNSLCFLAGPSFAAEIIQGLPCALVIHSNNQALALEFANKTPSFIRAYAQQDIIGGEIAGAYKNVIAIAGGVCDGLKLGNSAKASLLSRGLVEMQRFGAFFGGKTETFLGLSGAGDLFLTANSILSRNYRVGLGLAQNKPLEVVLEELGEVAEGVKTTNAIVEIARKYGIYTPIASELALLLKGKSVLESMNDLIRRA.

NADPH contacts are provided by tryptophan 11, arginine 30, arginine 31, and lysine 95. The sn-glycerol 3-phosphate site is built by lysine 95, glycine 123, and serine 125. Alanine 127 is a binding site for NADPH. Sn-glycerol 3-phosphate is bound by residues lysine 177, aspartate 230, serine 240, arginine 241, and asparagine 242. Residue lysine 177 is the Proton acceptor of the active site. Arginine 241 contacts NADPH. NADPH is bound by residues valine 265 and glutamate 267.

The protein belongs to the NAD-dependent glycerol-3-phosphate dehydrogenase family.

It is found in the cytoplasm. It catalyses the reaction sn-glycerol 3-phosphate + NAD(+) = dihydroxyacetone phosphate + NADH + H(+). It carries out the reaction sn-glycerol 3-phosphate + NADP(+) = dihydroxyacetone phosphate + NADPH + H(+). Its pathway is membrane lipid metabolism; glycerophospholipid metabolism. Functionally, catalyzes the reduction of the glycolytic intermediate dihydroxyacetone phosphate (DHAP) to sn-glycerol 3-phosphate (G3P), the key precursor for phospholipid synthesis. This chain is Glycerol-3-phosphate dehydrogenase [NAD(P)+], found in Helicobacter pylori (strain HPAG1).